Reading from the N-terminus, the 741-residue chain is ABC transporter D family member 2 (741 aa).

A run of 3 helical transmembrane segments spans residues 39–59 (GSLG…FSLV), 119–139 (FLSL…SVSI), and 260–280 (VVVM…VSGF). Residues 131–409 (ARTMLSVSIA…LMVALSQAIG (279 aa)) enclose the ABC transmembrane type-1 domain. Residues 518–740 (IKFENVSIVS…DDDHLKKPLS (223 aa)) enclose the ABC transporter domain. 551–558 (GPNGSGKS) serves as a coordination point for ATP.

This sequence belongs to the ABC transporter superfamily. ABCD family. Peroxisomal fatty acyl CoA transporter (TC 3.A.1.203) subfamily.

The protein localises to the membrane. In Dictyostelium discoideum (Social amoeba), this protein is ABC transporter D family member 2 (abcD2).